We begin with the raw amino-acid sequence, 205 residues long: GTP cyclohydrolase 1 (205 aa).

The Zn(2+) site is built by Cys95, His98, and Cys166.

It belongs to the GTP cyclohydrolase I family. As to quaternary structure, toroid-shaped homodecamer, composed of two pentamers of five dimers.

The enzyme catalyses GTP + H2O = 7,8-dihydroneopterin 3'-triphosphate + formate + H(+). It participates in cofactor biosynthesis; 7,8-dihydroneopterin triphosphate biosynthesis; 7,8-dihydroneopterin triphosphate from GTP: step 1/1. This is GTP cyclohydrolase 1 from Maricaulis maris (strain MCS10) (Caulobacter maris).